The chain runs to 266 residues: Uridylate kinase (266 aa).

26–29 (KLGG) contributes to the ATP binding site. Gly67 lines the UMP pocket. ATP-binding residues include Gly68 and Arg72. Residues Asp87 and 148–155 (LGAPYFST) contribute to the UMP site. The ATP site is built by Tyr181 and Asp184.

This sequence belongs to the UMP kinase family. Homohexamer.

It is found in the cytoplasm. It carries out the reaction UMP + ATP = UDP + ADP. It participates in pyrimidine metabolism; CTP biosynthesis via de novo pathway; UDP from UMP (UMPK route): step 1/1. Inhibited by UTP. In terms of biological role, catalyzes the reversible phosphorylation of UMP to UDP. The sequence is that of Uridylate kinase from Acidothermus cellulolyticus (strain ATCC 43068 / DSM 8971 / 11B).